Consider the following 162-residue polypeptide: UPF0178 protein RHOS4_24670 (162 aa).

The protein belongs to the UPF0178 family.

The protein is UPF0178 protein RHOS4_24670 of Cereibacter sphaeroides (strain ATCC 17023 / DSM 158 / JCM 6121 / CCUG 31486 / LMG 2827 / NBRC 12203 / NCIMB 8253 / ATH 2.4.1.) (Rhodobacter sphaeroides).